The chain runs to 920 residues: Probable helicase HelY (920 aa).

Residues 26–184 enclose the Helicase ATP-binding domain; sequence CAALERGHGV…WVQTVRGDTT (159 aa). 39–46 is an ATP binding site; that stretch reads APTGAGKT. The short motif at 132–135 is the DEVH box element; that stretch reads DEVH. Residues 265 to 469 enclose the Helicase C-terminal domain; the sequence is EVIAILDAEG…SYNMTINLVH (205 aa).

It belongs to the helicase family. SKI2 subfamily.

The chain is Probable helicase HelY (helY) from Mycobacterium leprae (strain TN).